The sequence spans 247 residues: 5-oxoprolinase subunit A (247 aa).

Belongs to the LamB/PxpA family. As to quaternary structure, forms a complex composed of PxpA, PxpB and PxpC.

The enzyme catalyses 5-oxo-L-proline + ATP + 2 H2O = L-glutamate + ADP + phosphate + H(+). Its function is as follows. Catalyzes the cleavage of 5-oxoproline to form L-glutamate coupled to the hydrolysis of ATP to ADP and inorganic phosphate. The protein is 5-oxoprolinase subunit A of Ralstonia pickettii (strain 12J).